Here is a 143-residue protein sequence, read N- to C-terminus: Large ribosomal subunit protein uL11 (143 aa).

It belongs to the universal ribosomal protein uL11 family. As to quaternary structure, part of the ribosomal stalk of the 50S ribosomal subunit. Interacts with L10 and the large rRNA to form the base of the stalk. L10 forms an elongated spine to which L12 dimers bind in a sequential fashion forming a multimeric L10(L12)X complex. Post-translationally, one or more lysine residues are methylated.

Forms part of the ribosomal stalk which helps the ribosome interact with GTP-bound translation factors. This chain is Large ribosomal subunit protein uL11, found in Cutibacterium acnes (strain DSM 16379 / KPA171202) (Propionibacterium acnes).